The sequence spans 546 residues: Putative inactive G-type lectin S-receptor-like serine/threonine-protein kinase SRK (546 aa).

The signal sequence occupies residues 1-31 (MRGELPNKHHSYTFFVFLFFFLILFPDLSIS). Topologically, residues 32–441 (VNTLSATESL…FGERRTIRGK (410 aa)) are extracellular. A Bulb-type lectin domain is found at 34–154 (TLSATESLTI…KINESDEFLW (121 aa)). Residues asparagine 46, asparagine 120, asparagine 147, and asparagine 243 are each glycosylated (N-linked (GlcNAc...) asparagine). In terms of domain architecture, EGF-like; atypical spans 293–329 (PKDTCDLYGICGPYAYCDMSTSPTCNCIKGFQPLSPQ). 4 cysteine pairs are disulfide-bonded: cysteine 297-cysteine 309, cysteine 303-cysteine 317, cysteine 378-cysteine 403, and cysteine 382-cysteine 388. The PAN domain maps to 348 to 428 (CGEDRFFRLM…DGQDLFVRLA (81 aa)). Asparagine 387 carries N-linked (GlcNAc...) asparagine glycosylation. The chain crosses the membrane as a helical span at residues 442–462 (IIGLIIGISLMLVLSFIIYCF). The Cytoplasmic portion of the chain corresponds to 463–546 (WKKKQKRARA…IVYKGRLLDG (84 aa)). The Protein kinase domain maps to 524 to 546 (FSDSNILGRGGFGIVYKGRLLDG). 530–538 (LGRGGFGIV) lines the ATP pocket.

It belongs to the protein kinase superfamily. Ser/Thr protein kinase family.

Its subcellular location is the cell membrane. Truncated and inactivated form of SRK, the female specificity determinant of self-incompatibility when active. Most A.thaliana cultivars contain such an inactive form and thus, are self-fertiles. The chain is Putative inactive G-type lectin S-receptor-like serine/threonine-protein kinase SRK (PSEUDOSRKA) from Arabidopsis thaliana (Mouse-ear cress).